Consider the following 629-residue polypeptide: tRNA uridine 5-carboxymethylaminomethyl modification enzyme MnmG (629 aa).

Residues 13–18 (GGGHAG), Val-125, and Ser-180 contribute to the FAD site. 273–287 (GPRYCPSIEDKVMRF) lines the NAD(+) pocket. Gln-370 serves as a coordination point for FAD.

It belongs to the MnmG family. Homodimer. Heterotetramer of two MnmE and two MnmG subunits. Requires FAD as cofactor.

It is found in the cytoplasm. NAD-binding protein involved in the addition of a carboxymethylaminomethyl (cmnm) group at the wobble position (U34) of certain tRNAs, forming tRNA-cmnm(5)s(2)U34. This Escherichia coli O127:H6 (strain E2348/69 / EPEC) protein is tRNA uridine 5-carboxymethylaminomethyl modification enzyme MnmG.